The chain runs to 235 residues: N-alpha-acetyltransferase 10 (235 aa).

An N-acetylmethionine modification is found at Met-1. The interval 1–58 is interaction with NAA15; it reads MNIRNARPEDLMNMQHCNLLCLPENYQMKYYFYHGLSWPQLSYIAEDENGKIVGYVLA. In terms of domain architecture, N-acetyltransferase spans 1-152; sequence MNIRNARPED…DAYAMKRDLT (152 aa). Lys-136 is subject to N6-acetyllysine; by autocatalysis. Residues 196–213 show a composition bias toward basic and acidic residues; that stretch reads EEKGLAAEDSGGDSKDLS. Residues 196–235 form a disordered region; sequence EEKGLAAEDSGGDSKDLSEVSETTESTDVKDSSEASDSAS. Position 205 is a phosphoserine (Ser-205). Phosphoserine; by IKKB is present on Ser-209. A phosphoserine mark is found at Ser-213 and Ser-216.

This sequence belongs to the acetyltransferase family. ARD1 subfamily. As to quaternary structure, component of the N-terminal acetyltransferase A complex (also called the NatA complex) composed of NAA10 and NAA15. Interacts with NAA15. Component of the N-terminal acetyltransferase A (NatA)/HYPK complex at least composed of NAA10, NAA15 and HYPK, which has N-terminal acetyltransferase activity. In complex with NAA15, interacts with HYPK. Component of the N-terminal acetyltransferase E (NatE) complex at least composed of NAA10, NAA15 and NAA50. Within the complex interacts with NAA15; the interaction is required for binding to NAAT50. Interacts with NAAT50. The interaction of the NatA complex with NAA50 reduces the acetylation activity of the NatA complex. Component of the N-terminal acetyltransferase E (NatE)/HYPK complex at least composed of NAA10, NAA15, NAA50 and HYPK. In complex with NAA15, interacts with HYPK; the interaction with HYPK reduces the capacity of the NatA complex to interact with NAA50. Interacts with HIF1A (via its ODD domain); the interaction increases HIF1A protein stability during normoxia, an down-regulates it when induced by hypoxia. Interacts with the ribosome. Binds to MYLK. Interacts with NAA16. Interacts (via its C-terminal domain) with TSC2, leading to its acetylation. Interacts with IKBKB. Interacts with HSPA1A and HSPA1B leading to its acetylation. Post-translationally, cleaved by caspases during apoptosis. In terms of processing, phosphorylation by IKBKB/IKKB at Ser-209 destabilises NAA10 and promotes its proteasome-mediated degradation. Autoacetylated at Lys-136 which stimulates its catalytic activity. As to expression, ubiquitous.

The protein localises to the cytoplasm. It is found in the nucleus. It carries out the reaction N-terminal glycyl-[protein] + acetyl-CoA = N-terminal N(alpha)-acetylglycyl-[protein] + CoA + H(+). The enzyme catalyses N-terminal L-alanyl-[protein] + acetyl-CoA = N-terminal N(alpha)-acetyl-L-alanyl-[protein] + CoA + H(+). The catalysed reaction is N-terminal L-seryl-[protein] + acetyl-CoA = N-terminal N(alpha)-acetyl-L-seryl-[protein] + CoA + H(+). It catalyses the reaction N-terminal L-valyl-[protein] + acetyl-CoA = N-terminal N(alpha)-acetyl-L-valyl-[protein] + CoA + H(+). It carries out the reaction N-terminal L-cysteinyl-[protein] + acetyl-CoA = N-terminal N(alpha)-acetyl-L-cysteinyl-[protein] + CoA + H(+). The enzyme catalyses N-terminal L-threonyl-[protein] + acetyl-CoA = N-terminal N(alpha)-acetyl-L-threonyl-[protein] + CoA + H(+). In terms of biological role, catalytic subunit of the N-terminal acetyltransferase A (NatA) complex which displays alpha (N-terminal) acetyltransferase activity. Acetylates amino termini that are devoid of initiator methionine. The alpha (N-terminal) acetyltransferase activity may be important for vascular, hematopoietic and neuronal growth and development. Without NAA15, displays epsilon (internal) acetyltransferase activity towards HIF1A, thereby promoting its degradation. Represses MYLK kinase activity by acetylation, and thus represses tumor cell migration. Acetylates, and stabilizes TSC2, thereby repressing mTOR activity and suppressing cancer development. Acetylates HSPA1A and HSPA1B at 'Lys-77' which enhances its chaperone activity and leads to preferential binding to co-chaperone HOPX. Acetylates HIST1H4A. Acts as a negative regulator of sister chromatid cohesion during mitosis. This is N-alpha-acetyltransferase 10 (Naa10) from Mus musculus (Mouse).